Consider the following 278-residue polypeptide: Probable F-box protein At1g14315 (278 aa).

The 43-residue stretch at 1–43 (MQLLPHDTVEDILERVPVKSLLRFKSACKQWKLTIESQYFQAK) folds into the F-box domain.

This is Probable F-box protein At1g14315 from Arabidopsis thaliana (Mouse-ear cress).